We begin with the raw amino-acid sequence, 489 residues long: Glucose-1-phosphate adenylyltransferase small subunit, chloroplastic/amyloplastic (489 aa).

A chloroplast-targeting transit peptide spans 1 to 52; the sequence is ITVPSTSSKNLQNSLAFSSSSLSGDKIQTTSFLNRRYCRISSRAPIVVSPKA.

This sequence belongs to the bacterial/plant glucose-1-phosphate adenylyltransferase family. As to quaternary structure, heterotetramer. As to expression, prominently expressed in the leaves. A lower level expression is seen in the roots.

Its subcellular location is the plastid. It is found in the chloroplast. It localises to the amyloplast. It catalyses the reaction alpha-D-glucose 1-phosphate + ATP + H(+) = ADP-alpha-D-glucose + diphosphate. It participates in glycan biosynthesis; starch biosynthesis. Its activity is regulated as follows. Activated by 3'phosphoglycerate, inhibited by orthophosphate. Allosteric regulation. In terms of biological role, this protein plays a role in synthesis of starch. It catalyzes the synthesis of the activated glycosyl donor, ADP-glucose from Glc-1-P and ATP. The chain is Glucose-1-phosphate adenylyltransferase small subunit, chloroplastic/amyloplastic (AGPB1) from Beta vulgaris (Sugar beet).